Here is a 143-residue protein sequence, read N- to C-terminus: Actin-depolymerizing factor 5 (143 aa).

In terms of domain architecture, ADF-H spans 11–143; the sequence is GMRVTDECTS…GFDIIQDRAK (133 aa).

The protein belongs to the actin-binding proteins ADF family. Expressed exclusively in root tip meristem.

It is found in the cytoplasm. The protein resides in the cytoskeleton. Functionally, actin-depolymerizing protein. Severs actin filaments (F-actin) and binds to actin monomers. This chain is Actin-depolymerizing factor 5 (ADF5), found in Arabidopsis thaliana (Mouse-ear cress).